Consider the following 49-residue polypeptide: DNA-directed RNA polymerase subunit Rpo12 (49 aa).

Positions 11, 27, and 30 each coordinate Zn(2+).

The protein belongs to the archaeal Rpo12/eukaryotic RPC10 RNA polymerase subunit family. Part of the RNA polymerase complex. Zn(2+) serves as cofactor.

It is found in the cytoplasm. It catalyses the reaction RNA(n) + a ribonucleoside 5'-triphosphate = RNA(n+1) + diphosphate. Functionally, DNA-dependent RNA polymerase (RNAP) catalyzes the transcription of DNA into RNA using the four ribonucleoside triphosphates as substrates. This is DNA-directed RNA polymerase subunit Rpo12 from Pyrococcus abyssi (strain GE5 / Orsay).